The primary structure comprises 468 residues: MPAPTTTLLIEGTFTELADEFAQYIDALRKNEGASLQSEIAPLIEPLRQQEQSEEEPDRKQRDEVLKKLVGAAAVLNAAPEKEIISAYNLLVHLVHQASNPDMFLSRICTYLAKPITTSPQFGPTLAISILSTIFNTLAPTDSSRFHVLLAIVAVIRQSGSSYAFEALKPQLAAQLPTWLSAWELDDEDAQKLHLAVADAAQASGDLELAQTHVVQALQTIPANESSSKEARDLAVRALTSALKSPGVFDFTSLTAADAIQALRSSDSTLFELLEIFTADTLDAYEDFIAATPLETISGGVLADGAEALQTKMRLLTLASLAASTPSRSLPYATIASALRVPVEDVEKWVIDTIRAGLVEGKLSQLRSEFLVHRATYRVFGEKQWAEVQGRLMVWRRSLESVLGVLRTERERYIRESMQAAAEETGQGKSGDKGAKGGDRRRNPQQQQQSQPSQPQQAREVELVGGAE.

The segment at 42–61 is disordered; the sequence is PLIEPLRQQEQSEEEPDRKQ. Positions 206 to 377 constitute a PCI domain; the sequence is DLELAQTHVV…SEFLVHRATY (172 aa). The interval 418–468 is disordered; that stretch reads MQAAAEETGQGKSGDKGAKGGDRRRNPQQQQQSQPSQPQQAREVELVGGAE. Positions 430–442 are enriched in basic and acidic residues; the sequence is SGDKGAKGGDRRR. The span at 444–457 shows a compositional bias: low complexity; the sequence is PQQQQQSQPSQPQQ.

The protein belongs to the eIF-3 subunit M family. In terms of assembly, component of the eukaryotic translation initiation factor 3 (eIF-3) complex.

It localises to the cytoplasm. In terms of biological role, component of the eukaryotic translation initiation factor 3 (eIF-3) complex, which is involved in protein synthesis of a specialized repertoire of mRNAs and, together with other initiation factors, stimulates binding of mRNA and methionyl-tRNAi to the 40S ribosome. The eIF-3 complex specifically targets and initiates translation of a subset of mRNAs involved in cell proliferation. The chain is Eukaryotic translation initiation factor 3 subunit M from Neosartorya fischeri (strain ATCC 1020 / DSM 3700 / CBS 544.65 / FGSC A1164 / JCM 1740 / NRRL 181 / WB 181) (Aspergillus fischerianus).